We begin with the raw amino-acid sequence, 406 residues long: GTPase Obg (406 aa).

The Obg domain maps to 1–159; sequence MKFVDEVSIF…RDLKLELKVL (159 aa). Residues 126–149 are disordered; it reads GNTRFKSSTNRAPRQTTPGKPGES. Residues 129 to 143 are compositionally biased toward polar residues; that stretch reads RFKSSTNRAPRQTTP. Residues 160–333 form the OBG-type G domain; the sequence is ADVGLLGLPN…ICRDIMHYLE (174 aa). GTP-binding positions include 166-173, 191-195, 213-216, 283-286, and 314-316; these read GLPNAGKS, FTTLV, DIPG, NKMD, and SAI. Mg(2+)-binding residues include S173 and T193. Positions 376 to 406 are disordered; that stretch reads SGVRSVDDIDEDDDFFDDEDDDGPEIIYVRD. The segment covering 383-399 has biased composition (acidic residues); it reads DIDEDDDFFDDEDDDGP.

This sequence belongs to the TRAFAC class OBG-HflX-like GTPase superfamily. OBG GTPase family. In terms of assembly, monomer. Mg(2+) serves as cofactor.

The protein resides in the cytoplasm. An essential GTPase which binds GTP, GDP and possibly (p)ppGpp with moderate affinity, with high nucleotide exchange rates and a fairly low GTP hydrolysis rate. Plays a role in control of the cell cycle, stress response, ribosome biogenesis and in those bacteria that undergo differentiation, in morphogenesis control. The polypeptide is GTPase Obg (Ectopseudomonas mendocina (strain ymp) (Pseudomonas mendocina)).